The chain runs to 318 residues: Ferredoxin--NADP reductase (318 aa).

D33, Q41, Y46, V84, F115, D276, and T316 together coordinate FAD.

The protein belongs to the ferredoxin--NADP reductase type 2 family. Homodimer. FAD serves as cofactor.

The enzyme catalyses 2 reduced [2Fe-2S]-[ferredoxin] + NADP(+) + H(+) = 2 oxidized [2Fe-2S]-[ferredoxin] + NADPH. In Lactobacillus johnsonii (strain CNCM I-12250 / La1 / NCC 533), this protein is Ferredoxin--NADP reductase.